A 486-amino-acid polypeptide reads, in one-letter code: Glutamyl-tRNA(Gln) amidotransferase subunit A (486 aa).

Active-site charge relay system residues include Lys75 and Ser150. Ser174 (acyl-ester intermediate) is an active-site residue.

Belongs to the amidase family. GatA subfamily. Heterotrimer of A, B and C subunits.

It catalyses the reaction L-glutamyl-tRNA(Gln) + L-glutamine + ATP + H2O = L-glutaminyl-tRNA(Gln) + L-glutamate + ADP + phosphate + H(+). Functionally, allows the formation of correctly charged Gln-tRNA(Gln) through the transamidation of misacylated Glu-tRNA(Gln) in organisms which lack glutaminyl-tRNA synthetase. The reaction takes place in the presence of glutamine and ATP through an activated gamma-phospho-Glu-tRNA(Gln). The sequence is that of Glutamyl-tRNA(Gln) amidotransferase subunit A from Nostoc punctiforme (strain ATCC 29133 / PCC 73102).